Consider the following 296-residue polypeptide: Light-independent protochlorophyllide reductase iron-sulfur ATP-binding protein (296 aa).

The tract at residues 1 to 20 is disordered; sequence MTTTLSRPTDGEGSVQVQQD. ATP-binding positions include 39 to 44 and Lys-68; that span reads GIGKST. Ser-43 contributes to the Mg(2+) binding site. Cys-124 and Cys-158 together coordinate [4Fe-4S] cluster. 209–210 contributes to the ATP binding site; it reads NR.

This sequence belongs to the NifH/BchL/ChlL family. As to quaternary structure, homodimer. Protochlorophyllide reductase is composed of three subunits; ChlL, ChlN and ChlB. Requires [4Fe-4S] cluster as cofactor.

The enzyme catalyses chlorophyllide a + oxidized 2[4Fe-4S]-[ferredoxin] + 2 ADP + 2 phosphate = protochlorophyllide a + reduced 2[4Fe-4S]-[ferredoxin] + 2 ATP + 2 H2O. The protein operates within porphyrin-containing compound metabolism; chlorophyll biosynthesis (light-independent). Its function is as follows. Component of the dark-operative protochlorophyllide reductase (DPOR) that uses Mg-ATP and reduced ferredoxin to reduce ring D of protochlorophyllide (Pchlide) to form chlorophyllide a (Chlide). This reaction is light-independent. The L component serves as a unique electron donor to the NB-component of the complex, and binds Mg-ATP. The sequence is that of Light-independent protochlorophyllide reductase iron-sulfur ATP-binding protein from Synechococcus sp. (strain CC9902).